A 71-amino-acid polypeptide reads, in one-letter code: MFDYLENEEVALDELKQMLRDRDPNDTRNQFKNNALHAYLFNEHCNNVEVVKLLLDSGTNPLRKNWRQLPH.

This is an uncharacterized protein from Vaccinia virus (strain Western Reserve) (VACV).